The sequence spans 660 residues: Bifunctional polymyxin resistance protein ArnA (660 aa).

The interval 1-304 (MKAVIFAYHD…TLGLVAGARL (304 aa)) is formyltransferase ArnAFT. His104 functions as the Proton donor; for formyltransferase activity in the catalytic mechanism. Residues Arg114 and 136–140 (VKRAD) contribute to the (6R)-10-formyltetrahydrofolate site. The dehydrogenase ArnADH stretch occupies residues 314 to 660 (RRIRVLILGV…RSVDIAERAS (347 aa)). NAD(+) contacts are provided by residues Asp347 and 368–369 (DI). Residues Ala393, Tyr398, and 432-433 (TS) each bind UDP-alpha-D-glucuronate. Glu434 (proton acceptor; for decarboxylase activity) is an active-site residue. UDP-alpha-D-glucuronate contacts are provided by residues Arg460, Asn492, 526-535 (KLIDGGQQKR), and Tyr613. The active-site Proton donor; for decarboxylase activity is the Arg619.

This sequence in the N-terminal section; belongs to the Fmt family. UDP-L-Ara4N formyltransferase subfamily. The protein in the C-terminal section; belongs to the NAD(P)-dependent epimerase/dehydratase family. UDP-glucuronic acid decarboxylase subfamily. Homohexamer, formed by a dimer of trimers.

It carries out the reaction UDP-alpha-D-glucuronate + NAD(+) = UDP-beta-L-threo-pentopyranos-4-ulose + CO2 + NADH. The enzyme catalyses UDP-4-amino-4-deoxy-beta-L-arabinose + (6R)-10-formyltetrahydrofolate = UDP-4-deoxy-4-formamido-beta-L-arabinose + (6S)-5,6,7,8-tetrahydrofolate + H(+). Its pathway is nucleotide-sugar biosynthesis; UDP-4-deoxy-4-formamido-beta-L-arabinose biosynthesis; UDP-4-deoxy-4-formamido-beta-L-arabinose from UDP-alpha-D-glucuronate: step 1/3. It functions in the pathway nucleotide-sugar biosynthesis; UDP-4-deoxy-4-formamido-beta-L-arabinose biosynthesis; UDP-4-deoxy-4-formamido-beta-L-arabinose from UDP-alpha-D-glucuronate: step 3/3. The protein operates within bacterial outer membrane biogenesis; lipopolysaccharide biosynthesis. Its function is as follows. Bifunctional enzyme that catalyzes the oxidative decarboxylation of UDP-glucuronic acid (UDP-GlcUA) to UDP-4-keto-arabinose (UDP-Ara4O) and the addition of a formyl group to UDP-4-amino-4-deoxy-L-arabinose (UDP-L-Ara4N) to form UDP-L-4-formamido-arabinose (UDP-L-Ara4FN). The modified arabinose is attached to lipid A and is required for resistance to polymyxin and cationic antimicrobial peptides. This Salmonella schwarzengrund (strain CVM19633) protein is Bifunctional polymyxin resistance protein ArnA.